Here is a 488-residue protein sequence, read N- to C-terminus: Protein kinase C and casein kinase substrate in neurons 2 protein (488 aa).

The region spanning 11–282 (VEVSSDSFWE…SIKAADAVED (272 aa)) is the F-BAR domain. Residues 25-274 (KRTVKRIDDG…GIYRELEQSI (250 aa)) adopt a coiled-coil conformation. Lys-53 is modified (N6-acetyllysine). Residues 163–176 (CKEEKLAVSREANS) show a composition bias toward basic and acidic residues. The segment at 163–183 (CKEEKLAVSREANSKADPSLN) is disordered. At Ser-273 the chain carries Phosphoserine. Residue Ser-315 is modified to Phosphoserine; by PKC. Positions 316–429 (RREKKKAADG…PFDEDTTSGT (114 aa)) are disordered. The span at 329–364 (TGINQTGDQSGQNKPSSNLSVPSNPAQSTQLQSSYN) shows a compositional bias: polar residues. An NPF1 motif is present at residues 364–366 (NPF). At Ser-375 the chain carries Phosphoserine; by IKKB. A compositionally biased stretch (polar residues) spans 386–396 (NVSSYEKTQNY). Ser-401 bears the Phosphoserine mark. Residues 406-418 (NNPFSSTDANGDS) show a composition bias toward polar residues. The NPF2 motif lies at 407–409 (NPF). The short motif at 419-421 (NPF) is the NPF3 element. The region spanning 428-488 (GTEVRVRALY…YPANYVEAIQ (61 aa)) is the SH3 domain. Ser-448 carries the post-translational modification Phosphoserine.

It belongs to the PACSIN family. Homodimer. May form heterooligomers with other PACSINs. Interacts (via NPF motifs) with EHD1 (via EH domain). Interacts with EHD3. Interacts (via the SH3 domain) with MICALL1. Interacts with RAC1. Interacts (via SH3 domain) with DNM1, SYN1, SYNJ1 and WASL. Interacts with CAV1. Interacts with TRPV4. Forms a complex with EHD4 and MICALL1; the complex controls CDH5 trafficking and coordinates angiogenesis. Post-translationally, phosphorylated by casein kinase 2 (CK2) and protein kinase C (PKC). Phosphorylation by PKC probably decreases the membrane binding and tubulation capacities of PACSIN2, thereby modulating the lifetime of caveolae. Widely expressed (at protein level). Isoforms 1/3 are predominantly expressed in heart and in PC-12 cells, a pheochromocytoma cell line (at protein level). Isoforms 2/4 are widely expressed with highest levels in muscle, testis and brain (at protein level).

It localises to the cytoplasm. The protein resides in the cytoskeleton. It is found in the cytoplasmic vesicle membrane. Its subcellular location is the cell projection. The protein localises to the ruffle membrane. It localises to the early endosome. The protein resides in the recycling endosome membrane. It is found in the cell membrane. Its subcellular location is the membrane. The protein localises to the caveola. It localises to the cell junction. The protein resides in the adherens junction. Functionally, regulates the morphogenesis and endocytosis of caveolae. Lipid-binding protein that is able to promote the tubulation of the phosphatidic acid-containing membranes it preferentially binds. Plays a role in intracellular vesicle-mediated transport. Involved in the endocytosis of cell-surface receptors like the EGF receptor, contributing to its internalization in the absence of EGF stimulus. Facilitates endothelial front-rear polarity during migration by recruiting EHD4 and MICALL1 to asymmetric adherens junctions between leader and follower cells. In Rattus norvegicus (Rat), this protein is Protein kinase C and casein kinase substrate in neurons 2 protein (Pacsin2).